Reading from the N-terminus, the 437-residue chain is Protein farnesyltransferase subunit beta (437 aa).

5 PFTB repeats span residues 123 to 164, 174 to 215, 222 to 263, 270 to 312, and 332 to 374; these read ATDV…CIIG, REKL…SLTN, FEGT…VILK, LKSL…PLLH, and QQAL…SIAQ. (2E,6E)-farnesyl diphosphate is bound by residues 248-251 and 291-294; these read HGGY and RCNK. Zn(2+) contacts are provided by aspartate 297 and cysteine 299. (2E,6E)-farnesyl diphosphate is bound at residue 300-303; it reads YSFW. Histidine 362 serves as a coordination point for Zn(2+). Position 432 is a phosphoserine (serine 432). Position 436 is a phosphothreonine (threonine 436).

It belongs to the protein prenyltransferase subunit beta family. As to quaternary structure, heterodimer of FNTA and FNTB. The cofactor is Zn(2+).

It catalyses the reaction L-cysteinyl-[protein] + (2E,6E)-farnesyl diphosphate = S-(2E,6E)-farnesyl-L-cysteinyl-[protein] + diphosphate. Essential subunit of the farnesyltransferase complex. Catalyzes the transfer of a farnesyl moiety from farnesyl diphosphate to a cysteine at the fourth position from the C-terminus of several proteins having the C-terminal sequence Cys-aliphatic-aliphatic-X. This Rattus norvegicus (Rat) protein is Protein farnesyltransferase subunit beta (Fntb).